Consider the following 213-residue polypeptide: Orotate phosphoribosyltransferase (213 aa).

Residue K26 coordinates 5-phospho-alpha-D-ribose 1-diphosphate. 34-35 (FF) provides a ligand contact to orotate. 5-phospho-alpha-D-ribose 1-diphosphate is bound by residues 72-73 (YK), R99, K100, K103, H105, and 124-132 (DDVITAGTA). The orotate site is built by T128 and R156.

The protein belongs to the purine/pyrimidine phosphoribosyltransferase family. PyrE subfamily. Homodimer. Mg(2+) is required as a cofactor.

The catalysed reaction is orotidine 5'-phosphate + diphosphate = orotate + 5-phospho-alpha-D-ribose 1-diphosphate. It functions in the pathway pyrimidine metabolism; UMP biosynthesis via de novo pathway; UMP from orotate: step 1/2. Catalyzes the transfer of a ribosyl phosphate group from 5-phosphoribose 1-diphosphate to orotate, leading to the formation of orotidine monophosphate (OMP). The protein is Orotate phosphoribosyltransferase of Pseudomonas syringae pv. tomato (strain ATCC BAA-871 / DC3000).